Here is a 262-residue protein sequence, read N- to C-terminus: Cytochrome c oxidase subunit 3 (262 aa).

The next 7 helical transmembrane spans lie at proline 13–methionine 33, glycine 38–tryptophan 58, glycine 82–phenylalanine 102, threonine 134–glycine 154, glycine 159–leucine 179, alanine 200–phenylalanine 220, and alanine 237–tyrosine 257.

It belongs to the cytochrome c oxidase subunit 3 family. In terms of assembly, component of the cytochrome c oxidase (complex IV, CIV), a multisubunit enzyme composed of a catalytic core of 3 subunits and several supernumerary subunits. The complex exists as a monomer or a dimer and forms supercomplexes (SCs) in the inner mitochondrial membrane with ubiquinol-cytochrome c oxidoreductase (cytochrome b-c1 complex, complex III, CIII).

It localises to the mitochondrion inner membrane. It carries out the reaction 4 Fe(II)-[cytochrome c] + O2 + 8 H(+)(in) = 4 Fe(III)-[cytochrome c] + 2 H2O + 4 H(+)(out). Component of the cytochrome c oxidase, the last enzyme in the mitochondrial electron transport chain which drives oxidative phosphorylation. The respiratory chain contains 3 multisubunit complexes succinate dehydrogenase (complex II, CII), ubiquinol-cytochrome c oxidoreductase (cytochrome b-c1 complex, complex III, CIII) and cytochrome c oxidase (complex IV, CIV), that cooperate to transfer electrons derived from NADH and succinate to molecular oxygen, creating an electrochemical gradient over the inner membrane that drives transmembrane transport and the ATP synthase. Cytochrome c oxidase is the component of the respiratory chain that catalyzes the reduction of oxygen to water. Electrons originating from reduced cytochrome c in the intermembrane space (IMS) are transferred via the dinuclear copper A center (CU(A)) of subunit 2 and heme A of subunit 1 to the active site in subunit 1, a binuclear center (BNC) formed by heme A3 and copper B (CU(B)). The BNC reduces molecular oxygen to 2 water molecules using 4 electrons from cytochrome c in the IMS and 4 protons from the mitochondrial matrix. This is Cytochrome c oxidase subunit 3 (COX3) from Prototheca wickerhamii.